The primary structure comprises 343 residues: Zinc finger CCCH domain-containing protein 39 (343 aa).

A coiled-coil region spans residues 114-147 (LSHLADAADEAAALRQENAELRVANNDLACRIAK). 2 consecutive C3H1-type zinc fingers follow at residues 268–296 (MFKTELCNKWEETGACPYGDQCQFAHGVA) and 306–334 (RYKTQVCRMVLAGGVCPYGHRCHFRHSIT).

This is Zinc finger CCCH domain-containing protein 39 from Oryza sativa subsp. japonica (Rice).